A 409-amino-acid chain; its full sequence is Dihydrolipoyllysine-residue succinyltransferase component of 2-oxoglutarate dehydrogenase complex (409 aa).

One can recognise a Lipoyl-binding domain in the interval 2–77 (AIEIKAPTFP…LSNELLGKLN (76 aa)). At Lys43 the chain carries N6-lipoyllysine. One can recognise a Peripheral subunit-binding (PSBD) domain in the interval 112–149 (ILSPAARKLAEEAGIDPNSIAGTGKGGRVTKEDVVAAV). Residues His380 and Asp384 contribute to the active site.

The protein belongs to the 2-oxoacid dehydrogenase family. In terms of assembly, forms a 24-polypeptide structural core with octahedral symmetry. Part of the 2-oxoglutarate dehydrogenase (OGDH) complex composed of E1 (2-oxoglutarate dehydrogenase), E2 (dihydrolipoamide succinyltransferase) and E3 (dihydrolipoamide dehydrogenase); the complex contains multiple copies of the three enzymatic components (E1, E2 and E3). (R)-lipoate serves as cofactor.

It catalyses the reaction N(6)-[(R)-dihydrolipoyl]-L-lysyl-[protein] + succinyl-CoA = N(6)-[(R)-S(8)-succinyldihydrolipoyl]-L-lysyl-[protein] + CoA. Its pathway is amino-acid degradation; L-lysine degradation via saccharopine pathway; glutaryl-CoA from L-lysine: step 6/6. Functionally, E2 component of the 2-oxoglutarate dehydrogenase (OGDH) complex which catalyzes the second step in the conversion of 2-oxoglutarate to succinyl-CoA and CO(2). In Pseudomonas aeruginosa (strain ATCC 15692 / DSM 22644 / CIP 104116 / JCM 14847 / LMG 12228 / 1C / PRS 101 / PAO1), this protein is Dihydrolipoyllysine-residue succinyltransferase component of 2-oxoglutarate dehydrogenase complex (sucB).